The primary structure comprises 426 residues: Kynureninase (426 aa).

Pyridoxal 5'-phosphate is bound by residues Leu-110, Ser-111, 138–141, Asp-223, His-226, and Tyr-248; that span reads FPSD. Lys-249 is modified (N6-(pyridoxal phosphate)lysine). Pyridoxal 5'-phosphate is bound by residues Trp-279 and Asn-307.

The protein belongs to the kynureninase family. Homodimer. It depends on pyridoxal 5'-phosphate as a cofactor.

The enzyme catalyses L-kynurenine + H2O = anthranilate + L-alanine + H(+). It catalyses the reaction 3-hydroxy-L-kynurenine + H2O = 3-hydroxyanthranilate + L-alanine + H(+). It functions in the pathway amino-acid degradation; L-kynurenine degradation; L-alanine and anthranilate from L-kynurenine: step 1/1. Its pathway is cofactor biosynthesis; NAD(+) biosynthesis; quinolinate from L-kynurenine: step 2/3. In terms of biological role, catalyzes the cleavage of L-kynurenine (L-Kyn) and L-3-hydroxykynurenine (L-3OHKyn) into anthranilic acid (AA) and 3-hydroxyanthranilic acid (3-OHAA), respectively. The sequence is that of Kynureninase from Myxococcus xanthus (strain DK1622).